Consider the following 208-residue polypeptide: MNPVDRPLLDIGLTRLEFLRISGKGLAGLTIAPALLSLLGCKQEDIDSGTVGLINTPKGVLVTQRARCTGCHRCEISCTNFNDGSVGTFFSRIKIHRNYFFGDNGVGSGGGLYGDLNYTADTCRQCKEPQCMNVCPIGAITWQQKEGCITVDHKRCIGCSACTTACPWMMATVNTESKKSSKCVLCGECANACPTGALKIIEWKDITV.

4 consecutive 4Fe-4S ferredoxin-type domains span residues 59-88, 114-145, 147-176, and 174-203; these read GVLV…SVGT, GDLN…WQQK, GCIT…VNTE, and NTES…IIEW. [4Fe-4S] cluster is bound by residues Cys-68, Cys-71, Cys-74, Cys-78, Cys-123, Cys-126, Cys-131, Cys-135, Cys-156, Cys-159, Cys-162, Cys-166, Cys-183, Cys-186, Cys-189, and Cys-193.

This is an uncharacterized protein from Escherichia coli O157:H7.